A 212-amino-acid chain; its full sequence is Riboflavin kinase (212 aa).

The tract at residues 1 to 83 is unknown; that stretch reads MTELYCERKT…NLLRYFDIAS (83 aa). A riboflavin kinase region spans residues 84-212; sequence IKLVGRVVTG…GDRVELEVYL (129 aa). 93-98 is a CDP binding site; that stretch reads GLGEGA. The Mg(2+) site is built by threonine 122 and asparagine 124. FMN-binding residues include threonine 179 and glutamate 187. Position 192–195 (192–195) interacts with CDP; the sequence is VRVR.

It belongs to the archaeal riboflavin kinase family. Mg(2+) is required as a cofactor.

It carries out the reaction riboflavin + CTP = CDP + FMN + H(+). It functions in the pathway cofactor biosynthesis; FMN biosynthesis; FMN from riboflavin (CTP route): step 1/1. Catalyzes the CTP-dependent phosphorylation of riboflavin (vitamin B2) to form flavin mononucleotide (FMN). In Pyrobaculum calidifontis (strain DSM 21063 / JCM 11548 / VA1), this protein is Riboflavin kinase (ribK).